We begin with the raw amino-acid sequence, 488 residues long: Protein Notchless (488 aa).

Positions 1–22 are disordered; sequence MLAKKQKMQETDTEQEATPHTI. Positions 19 to 101 are ubiquitin-like (UBL) domain; that stretch reads PHTIQARLVS…VIDIVYQPQA (83 aa). WD repeat units lie at residues 117–156, 159–198, 202–246, 249–287, 329–370, 373–412, 415–454, and 457–488; these read GHAE…PHFT, GHKQ…QKGR, GHKK…CLMN, GHTN…LCRT, LQES…CVER, GHQN…YMAT, GHVQ…LAQE, and GHAD…LWAY.

It belongs to the NLE1/RSA4 family. Interacts with Notch (via cytoplasmic domain). Associates with the pre-60S ribosomal particle.

It is found in the nucleus. The protein resides in the nucleolus. Its function is as follows. Plays a role in regulating Notch activity. The polypeptide is Protein Notchless (Drosophila melanogaster (Fruit fly)).